The chain runs to 145 residues: Transcriptional regulator MraZ (145 aa).

SpoVT-AbrB domains lie at 7 to 54 (NATN…GPDL) and 83 to 126 (GVFM…QPQA).

The protein belongs to the MraZ family. As to quaternary structure, forms oligomers.

The protein localises to the cytoplasm. Its subcellular location is the nucleoid. In Rhizobium leguminosarum bv. trifolii (strain WSM2304), this protein is Transcriptional regulator MraZ.